The primary structure comprises 69 residues: Small integral membrane protein 20 (69 aa).

The Mitochondrial matrix portion of the chain corresponds to 1 to 8; the sequence is MAAARNLR. The helical transmembrane segment at 9 to 29 threads the bilayer; sequence TALIFGGFISMVGAAFYPIYF. Topologically, residues 30–69 are mitochondrial intermembrane; the sequence is RPLMRLEEYQKEQAVNRAGIVQEDVQPPGLKVWSDPFGRK. Phenylalanine 66 carries the phenylalanine amide modification.

As to quaternary structure, component of the MITRAC (mitochondrial translation regulation assembly intermediate of cytochrome c oxidase complex) complex, the core components of this complex being COA3/MITRAC12 and COX14. Interacts with COA3/MITRAC12 and COX4I1. Directly interacts with newly synthesized MT-CO1/COX1. In terms of tissue distribution, highly expressed in the hypothalamus, the spinal cord, and sensory ganglia (at protein level). Also expressed on in the epidermis and dermis layers of the skin (at protein level). Expressed in preadipocytes and adipocytes (at protein level). Expressed in the ovary, specifically in granulosa cells of follicles that have passed the primary stage and in oocytes (at protein level).

Its subcellular location is the mitochondrion inner membrane. It localises to the secreted. In terms of biological role, component of the MITRAC (mitochondrial translation regulation assembly intermediate of cytochrome c oxidase complex) complex, that regulates cytochrome c oxidase assembly. Promotes the progression of complex assembly after the association of MT-CO1/COX1 with COX4I1 and COX6C. Chaperone-like assembly factor required to stabilize newly synthesized MT-CO1/COX1 and to prevent its premature turnover. Its function is as follows. Peptide involved in a broad spectrum of regulatory functions. Is a ligand for GPR173. As part of the reproductive cycle, it regulates gonadotropin-releasing hormone (GnRH) signaling in the hypothalamus and pituitary gland which augments the release of luteinizing hormone. More specifically, it regulates the expression of transcription factors CEBPB and POU2F1/OCT1 through the cAMP-PKA signaling pathway, which subsequently regulate the expression of GNRHR and KISS1. Plays a protective role in memory retention through activation of GNRHR. Regulates the secretion of AVP by hypothalamic neurons. Plays a role in the transduction of the itch sensation. Induces anxiolytic effects, reducing behavior associated with anxiety. Regulates food intake as well as satiation and satiety by increasing Nucb2 expression in neurons. In the ovary, it regulates follicular growth by stimulating granulosa cell proliferation by increasing the expression of GPR173, CREB1, CYP19A1, KITLG, FSHR, and LHCGR. It also increases the production of estradiol (E2). In the heart, it regulates contractility and relaxation by activating the AKT1-NOS3 and MAPK1-MAPK3 signaling pathways. It also plays a cardioprotective role during ischemia, where it activates the SAFE and RISK pathways. Stimulates the proliferation and differentiation of preadipocytes. In pancreatic islet cells, it induces proliferation of islet cells as well as the production of INS through activation of the MAPK1-MAPK3 signaling pathways. The chain is Small integral membrane protein 20 from Mus musculus (Mouse).